We begin with the raw amino-acid sequence, 28 residues long: ALWKDILKNVGKAAGKAVLNTVTDMVNQ.

Position 28 is a glutamine amide (glutamine 28).

It belongs to the frog skin active peptide (FSAP) family. Dermaseptin subfamily. As to expression, expressed by the skin glands.

It localises to the secreted. Functionally, antimicrobial peptide with activity against the Gram-positive bacterium S.aureus, and the Gram-negative bacteria E.coli and P.aeruginosa. Probably acts by disturbing membrane functions with its amphipathic structure. Has an activity of stimulation of insulin release, which may protect the species from being eaten by predators by causing fatal hypoglycemia. Has hemolytic activity (60% hemolysis at 128 ug/ml). This is Dermaseptin-2 from Phyllomedusa tarsius (Brownbelly leaf frog).